Here is a 626-residue protein sequence, read N- to C-terminus: ATP-dependent zinc metalloprotease FtsH 3 (626 aa).

Over 1-7 (MNKLFRS) the chain is Cytoplasmic. A helical transmembrane segment spans residues 8-28 (LAFYMLILVISVAIAVQLGGT). At 29 to 103 (SQQTTQLVYS…LDFRQDNTSG (75 aa)) the chain is on the extracellular side. A helical transmembrane segment spans residues 104 to 124 (IWAMLLQTLVPVVLVLLAFFF). Over 125–626 (IMQQTQGSGN…GGTSQVAPAF (502 aa)) the chain is Cytoplasmic. 197-204 (GPPGTGKT) contacts ATP. Position 420 (H420) interacts with Zn(2+). Residue E421 is part of the active site. Zn(2+)-binding residues include H424 and D496. Residues 602–626 (PPRPKPEPLKPRMVGGGTSQVAPAF) are disordered.

The protein in the central section; belongs to the AAA ATPase family. This sequence in the C-terminal section; belongs to the peptidase M41 family. As to quaternary structure, homohexamer. Zn(2+) serves as cofactor.

Its subcellular location is the cell membrane. Its function is as follows. Acts as a processive, ATP-dependent zinc metallopeptidase for both cytoplasmic and membrane proteins. Plays a role in the quality control of integral membrane proteins. This Symbiobacterium thermophilum (strain DSM 24528 / JCM 14929 / IAM 14863 / T) protein is ATP-dependent zinc metalloprotease FtsH 3.